We begin with the raw amino-acid sequence, 329 residues long: MDEKKITMNVRNDELSEESKTLISSLPSDKNSTGVNVCKYQGCWYTPPILQGVLNFQKNFKPQDTDIIVASFPKCGTTWLKALTFALVRRSKHPSHDDHHPLLSDNPHVLSPSLEMYLYLCSENPDLTKFSSSSRLFSTHMPSHTLQEGLKGSTCKIVYMSRNVKDTLVSYWHFFCKKQTDDNIISSVEDTFEMFCRGVNFFGPFWDHVLSYWRGSLEDPNHVLFMKFEEMKEEPREQIKRLAEFLGCLFTKEEEESGLVDEIIDLCSLRNLSSLEINKTGKLHSTGRENKTFFRKGEVGDWKNYLTPEMENKIDMIIQEKLQNSGLKF.

Residue 74–79 (KCGTTW) participates in 3'-phosphoadenylyl sulfate binding. His-140 (proton acceptor) is an active-site residue. 3'-phosphoadenylyl sulfate is bound by residues Arg-162, Ser-170, and 295 to 297 (RKG).

It belongs to the sulfotransferase 1 family.

The protein resides in the cytoplasm. Its function is as follows. Sulfotransferase that utilizes 3'-phospho-5'-adenylyl sulfate (PAPS) as sulfonate donor. The protein is Cytosolic sulfotransferase 6 (SOT6) of Arabidopsis thaliana (Mouse-ear cress).